The chain runs to 282 residues: Nudix hydrolase 7 (282 aa).

One can recognise a Nudix hydrolase domain in the interval 101 to 233; that stretch reads SHVVGAGALV…KNEMFKFMAN (133 aa). The short motif at 139 to 160 is the Nudix box element; the sequence is GVINEGEDIWTGVAREVEEETG. Mg(2+) contacts are provided by Glu-154 and Glu-158.

It belongs to the Nudix hydrolase family. Homodimer. Interacts with RACK1A, GG1 and GG2. The cofactor is Mg(2+). As to expression, expressed in stems, leaves, roots, flowers and siliques.

The protein localises to the nucleus. Its subcellular location is the cytoplasm. The protein resides in the cell membrane. The enzyme catalyses ADP-D-ribose + H2O = D-ribose 5-phosphate + AMP + 2 H(+). The catalysed reaction is NAD(+) + H2O = beta-nicotinamide D-ribonucleotide + AMP + 2 H(+). It carries out the reaction NADH + H2O = reduced beta-nicotinamide D-ribonucleotide + AMP + 2 H(+). Not inhibited by fluoride. Its function is as follows. Mediates the hydrolysis of some nucleoside diphosphate derivatives. Can use both NADH and ADP-ribose as substrates, but not 8-oxo-dGTP, cyclic ADP-ribose, GDP-mannose, UDP-glucose, ATP, or GTP. Exerts negative control of EDS1 signaling. This Arabidopsis thaliana (Mouse-ear cress) protein is Nudix hydrolase 7 (NUDT7).